The following is a 187-amino-acid chain: UPF0301 protein YqgE (187 aa).

It belongs to the UPF0301 (AlgH) family.

The polypeptide is UPF0301 protein YqgE (Salmonella agona (strain SL483)).